The chain runs to 118 residues: uncharacterized protein (118 aa).

Positions 1-118 are disordered; the sequence is MASARGAKQS…AARQNEKTAR (118 aa). Low complexity predominate over residues 13-28; it reads RVGTTRYTETSTVRVE. A compositionally biased stretch (basic and acidic residues) spans 29–49; that stretch reads TSSHRVETSSRRVETSQRRSE.

This is an uncharacterized protein from Homo sapiens (Human).